A 331-amino-acid polypeptide reads, in one-letter code: Anthranilate phosphoribosyltransferase (331 aa).

5-phospho-alpha-D-ribose 1-diphosphate-binding positions include glycine 79, 82–83, threonine 87, 89–92, 107–115, and alanine 119; these read GD, NIST, and KHGNYGATS. Glycine 79 lines the anthranilate pocket. Serine 91 provides a ligand contact to Mg(2+). Residue asparagine 110 participates in anthranilate binding. Arginine 165 provides a ligand contact to anthranilate. Positions 223 and 224 each coordinate Mg(2+).

This sequence belongs to the anthranilate phosphoribosyltransferase family. As to quaternary structure, homodimer. Mg(2+) serves as cofactor.

The catalysed reaction is N-(5-phospho-beta-D-ribosyl)anthranilate + diphosphate = 5-phospho-alpha-D-ribose 1-diphosphate + anthranilate. It participates in amino-acid biosynthesis; L-tryptophan biosynthesis; L-tryptophan from chorismate: step 2/5. Catalyzes the transfer of the phosphoribosyl group of 5-phosphorylribose-1-pyrophosphate (PRPP) to anthranilate to yield N-(5'-phosphoribosyl)-anthranilate (PRA). The chain is Anthranilate phosphoribosyltransferase from Bacteroides fragilis (strain YCH46).